Here is a 130-residue protein sequence, read N- to C-terminus: Small ribosomal subunit protein uS11 (130 aa).

The protein belongs to the universal ribosomal protein uS11 family. Part of the 30S ribosomal subunit. Interacts with proteins S7 and S18. Binds to IF-3.

In terms of biological role, located on the platform of the 30S subunit, it bridges several disparate RNA helices of the 16S rRNA. Forms part of the Shine-Dalgarno cleft in the 70S ribosome. The chain is Small ribosomal subunit protein uS11 from Prochlorococcus marinus (strain MIT 9211).